Consider the following 115-residue polypeptide: NADH-ubiquinone oxidoreductase chain 3 (115 aa).

The next 3 helical transmembrane spans lie at 3–23 (LMLT…IAFW), 55–75 (FFLV…LLPL), and 84–104 (LNTM…SLAY).

It belongs to the complex I subunit 3 family. As to quaternary structure, core subunit of respiratory chain NADH dehydrogenase (Complex I) which is composed of 45 different subunits. Interacts with TMEM186. Interacts with TMEM242.

Its subcellular location is the mitochondrion inner membrane. It carries out the reaction a ubiquinone + NADH + 5 H(+)(in) = a ubiquinol + NAD(+) + 4 H(+)(out). Functionally, core subunit of the mitochondrial membrane respiratory chain NADH dehydrogenase (Complex I) which catalyzes electron transfer from NADH through the respiratory chain, using ubiquinone as an electron acceptor. Essential for the catalytic activity of complex I. In Equus asinus (Donkey), this protein is NADH-ubiquinone oxidoreductase chain 3.